Reading from the N-terminus, the 365-residue chain is Tetraacyldisaccharide 4'-kinase (365 aa).

68–75 (VVGGAGKT) contacts ATP.

It belongs to the LpxK family.

The enzyme catalyses a lipid A disaccharide + ATP = a lipid IVA + ADP + H(+). It participates in glycolipid biosynthesis; lipid IV(A) biosynthesis; lipid IV(A) from (3R)-3-hydroxytetradecanoyl-[acyl-carrier-protein] and UDP-N-acetyl-alpha-D-glucosamine: step 6/6. Functionally, transfers the gamma-phosphate of ATP to the 4'-position of a tetraacyldisaccharide 1-phosphate intermediate (termed DS-1-P) to form tetraacyldisaccharide 1,4'-bis-phosphate (lipid IVA). This Chlamydia pneumoniae (Chlamydophila pneumoniae) protein is Tetraacyldisaccharide 4'-kinase.